The sequence spans 427 residues: Enolase (427 aa).

Gln-163 provides a ligand contact to (2R)-2-phosphoglycerate. Glu-205 functions as the Proton donor in the catalytic mechanism. Residues Asp-242, Glu-285, and Asp-312 each contribute to the Mg(2+) site. Residues Lys-337, Arg-366, Ser-367, and Lys-388 each contribute to the (2R)-2-phosphoglycerate site. Lys-337 functions as the Proton acceptor in the catalytic mechanism.

This sequence belongs to the enolase family. The cofactor is Mg(2+).

Its subcellular location is the cytoplasm. It is found in the secreted. The protein resides in the cell surface. The catalysed reaction is (2R)-2-phosphoglycerate = phosphoenolpyruvate + H2O. It functions in the pathway carbohydrate degradation; glycolysis; pyruvate from D-glyceraldehyde 3-phosphate: step 4/5. Catalyzes the reversible conversion of 2-phosphoglycerate (2-PG) into phosphoenolpyruvate (PEP). It is essential for the degradation of carbohydrates via glycolysis. In Beijerinckia indica subsp. indica (strain ATCC 9039 / DSM 1715 / NCIMB 8712), this protein is Enolase.